The primary structure comprises 822 residues: Nucleolar complex protein 3 (822 aa).

3 disordered regions span residues 1-86 (MGTK…DGDD), 106-142 (ANKR…KEQD), and 172-199 (KPKQ…EDSD). Positions 13–23 (RAAHLKSKKTP) are enriched in basic residues. A compositionally biased stretch (basic and acidic residues) spans 35-45 (KRDQLKSKREQ). A Nuclear localization signal motif is present at residues 41–48 (SKREQGQN). The span at 76 to 86 (PLEEDNEDGDD) shows a compositional bias: acidic residues. A compositionally biased stretch (polar residues) spans 116-126 (TGENDPDQGQS). Acidic residues predominate over residues 181 to 199 (EEEEDDSEEDGDTEYEDSD). The residue at position 187 (serine 187) is a Phosphoserine. Threonine 193 carries the phosphothreonine modification. At serine 198 the chain carries Phosphoserine. The stretch at 445 to 509 (KIKNVNLDAE…NKQAKHQKLT (65 aa)) forms a coiled coil.

It belongs to the CBF/MAK21 family.

The protein resides in the nucleus. The protein localises to the nucleolus. This is Nucleolar complex protein 3 from Drosophila melanogaster (Fruit fly).